Reading from the N-terminus, the 396-residue chain is Adenosine 3'-phospho 5'-phosphosulfate transporter 2 (396 aa).

Positions 22 to 42 (NGGESAGNSPPSQRKSSTSES) are disordered. Positions 27–42 (AGNSPPSQRKSSTSES) are enriched in polar residues. Phosphoserine occurs at positions 37 and 40. A glycan (N-linked (GlcNAc...) asparagine) is linked at N57. A run of 10 helical transmembrane segments spans residues 66–86 (CAGVFFLYILYGYLQELIFTV), 91–111 (PYGWFLTLVQFGYYIGFGLVE), 140–160 (LILAALTLGTMGLSNSSLGYL), 163–183 (PTQVIFKCCKLIPVLVGSILI), 189–209 (GLLDFAAATCMCIGLAWFTLA), 216–236 (NFNLLGVAMISGALLCDAAIG), 253–273 (VVFYSYGLGFVYLFVIMLVTG), 290–310 (FGYGFLFSLSGYLGIQFVLAL), 318–338 (IAATVTTARKAVTIAFSFVLF), and 342–362 (FTLQYLWSGLIVVLGIYLNVY).

The protein belongs to the nucleotide-sugar transporter family. SLC35B subfamily.

The protein localises to the golgi apparatus membrane. In terms of biological role, mediates the transport of adenosine 3'-phospho 5'-phosphosulfate (PAPS), from cytosol into Golgi. PAPS is a universal sulfuryl donor for sulfation events that take place in the Golgi. Essential for viability. Involved in glycosaminoglycan synthesis and the subsequent signaling. May be involved in hh and dpp signaling by controlling the sulfation of heparan sulfate (HS). This Drosophila melanogaster (Fruit fly) protein is Adenosine 3'-phospho 5'-phosphosulfate transporter 2 (Papst2).